Here is a 204-residue protein sequence, read N- to C-terminus: Somatotropin (204 aa).

Residues 1–17 form the signal peptide; sequence MNSVVLLLSVVCLGVSS. At Gln18 the chain carries Pyrrolidone carboxylic acid. His36 contributes to the Zn(2+) binding site. Cysteines 69 and 177 form a disulfide. A Zn(2+)-binding site is contributed by Glu186. A disulfide bridge links Cys194 with Cys202.

Belongs to the somatotropin/prolactin family.

Its subcellular location is the secreted. In terms of biological role, growth hormone plays an important role in growth control and involved in the regulation of several anabolic processes. This Oreochromis niloticus (Nile tilapia) protein is Somatotropin (gh).